A 921-amino-acid chain; its full sequence is Isoleucine--tRNA ligase (921 aa).

A 'HIGH' region motif is present at residues 57–67; sequence PYANGELHMGH. L-isoleucyl-5'-AMP is bound at residue Glu552. The 'KMSKS' region motif lies at 593–597; it reads KMSKS. Lys596 is a binding site for ATP. Zn(2+) is bound by residues Cys888, Cys891, Cys908, and Cys911.

Belongs to the class-I aminoacyl-tRNA synthetase family. IleS type 1 subfamily. In terms of assembly, monomer. Requires Zn(2+) as cofactor.

Its subcellular location is the cytoplasm. It carries out the reaction tRNA(Ile) + L-isoleucine + ATP = L-isoleucyl-tRNA(Ile) + AMP + diphosphate. Catalyzes the attachment of isoleucine to tRNA(Ile). As IleRS can inadvertently accommodate and process structurally similar amino acids such as valine, to avoid such errors it has two additional distinct tRNA(Ile)-dependent editing activities. One activity is designated as 'pretransfer' editing and involves the hydrolysis of activated Val-AMP. The other activity is designated 'posttransfer' editing and involves deacylation of mischarged Val-tRNA(Ile). This Listeria innocua serovar 6a (strain ATCC BAA-680 / CLIP 11262) protein is Isoleucine--tRNA ligase.